A 483-amino-acid polypeptide reads, in one-letter code: Regulatory protein ViaA (483 aa).

The protein belongs to the ViaA family. In terms of assembly, homodimer. Interacts with RavA.

Its subcellular location is the cytoplasm. In terms of biological role, component of the RavA-ViaA chaperone complex, which may act on the membrane to optimize the function of some of the respiratory chains. ViaA stimulates the ATPase activity of RavA. The sequence is that of Regulatory protein ViaA from Shigella boydii serotype 18 (strain CDC 3083-94 / BS512).